A 337-amino-acid chain; its full sequence is GTPase Obg (337 aa).

Residues 1-159 enclose the Obg domain; sequence MKFVDSASIF…LMLNMELKLM (159 aa). In terms of domain architecture, OBG-type G spans 160 to 323; the sequence is ADVGLVGFPN…LKDELWREVS (164 aa). GTP-binding positions include 166-173, 191-195, 213-216, 280-283, and 304-306; these read GFPNAGKS, FTTLV, DIPG, TKMD, and SAV. Mg(2+)-binding residues include Ser-173 and Thr-193.

Belongs to the TRAFAC class OBG-HflX-like GTPase superfamily. OBG GTPase family. Monomer. Mg(2+) is required as a cofactor.

The protein localises to the cytoplasm. In terms of biological role, an essential GTPase which binds GTP, GDP and possibly (p)ppGpp with moderate affinity, with high nucleotide exchange rates and a fairly low GTP hydrolysis rate. Plays a role in control of the cell cycle, stress response, ribosome biogenesis and in those bacteria that undergo differentiation, in morphogenesis control. The protein is GTPase Obg of Pelodictyon phaeoclathratiforme (strain DSM 5477 / BU-1).